The primary structure comprises 360 residues: MLLDKLAFIENKYDELSVKISDPSIMQNQNEWRKLCKEQADLEIIVNAYKEYKQVIEDLQVNKEMLSDESDREMKEMLNEEIASLSQREVELEKEIQILLLPKDPNDDKNVFVEIRGGAGGEEAALFAYNLFRMYTRYAERQRWSTEIMSLNETDIGGFKEVVFMIKGNGAYSKLKYESGVHRVQRVPDTESSGRIHTSTVTVAVLPEVDDVEIEIADKDVRIDVFRASGHGGQCVNTTDSAVRITHLPSGLVVSCQDEKSQLKNKEKAMKVLRSRLFEKAEQERADGIAADRKSQVGTGDRSERIRTYNYPQGRITDHRIGLTLYKLDSFLDGDVQEMINALITADQAEKMQKMGNSEM.

At glutamine 234 the chain carries N5-methylglutamine.

Belongs to the prokaryotic/mitochondrial release factor family. In terms of processing, methylated by PrmC. Methylation increases the termination efficiency of RF1.

It is found in the cytoplasm. In terms of biological role, peptide chain release factor 1 directs the termination of translation in response to the peptide chain termination codons UAG and UAA. The chain is Peptide chain release factor 1 from Clostridium botulinum (strain Eklund 17B / Type B).